Reading from the N-terminus, the 191-residue chain is Calcium and integrin-binding protein 1 (191 aa).

Gly2 carries the N-myristoyl glycine lipid modification. 2 EF-hand domains span residues 103 to 138 and 148 to 183; these read TPDI…LTGE and EMKQ…SPDF. Ca(2+) contacts are provided by Asp116, Asp118, Asp120, Thr122, Asp127, Asp161, Asp163, Asp165, Thr167, and Glu172. Asp118 carries the post-translational modification Phosphoserine.

As to quaternary structure, monomer. Interacts with MYO1C. Interacts (via C-terminal region) with PPP3R1 and CACNA1C; the interactions increase upon cardiomyocytes hypertrophy. Interacts with the heterodimeric integrin alpha-IIb/beta3 (ITGA2B-ITGB3). Interacts with ITGA2B (via cytoplasmic domain); the interaction is direct and calcium-dependent. Interacts with the protein kinases PLK2/SNK and PRKDC (via the region immediately upstream of the kinase domain). Interacts with PLK3; the interaction inhibits PLK3 kinase activity. Interacts with PSEN2. Interacts (via C-terminus) with F8. Interacts with NBR1 (via C-terminus). Interacts with FEZ1 (via C-terminus). Interacts with UBR5 (via C-terminus); the interaction is sensitive to DNA damage, and may target CIB1 for ubiquitin-mediated degradation. Interacts with IFI6; the interaction is direct. Interacts with BCL2. Interacts with ITPR3; the interaction occurs in a calcium-dependent manner. Interacts with PTK2/FAK1. Interacts with MAP3K5; the interaction inhibits MAP3K5 activation by phosphorylation, and its subsequent interaction with TRAF2. Isoform 2 interacts with PRKD2 (via N-terminal AP-rich region), PTK2/FAK1 and PAK1. Interacts with TAS1R2 (via C-terminus); the interaction is independent of the myristoylation state of CIB1. Interacts (via C-terminal region) with STMN2 (via the N-terminal region); the interaction is direct, occurs in a calcium-dependent manner and attenuates the STMN2-induced neurite outgrowth inhibition. Interacts with SPHK1, the interaction occurs in a calcium-dependent manner. Interacts with ITGA2B (via C-terminal cytoplasmic tail); the interaction occurs upon platelet aggregation and is stabilized/increased in a calcium and magnesium-dependent manner. Interacts with PAK1 (via N-terminal region); the interaction is direct and occurs in a calcium-dependent manner. Interacts with RAC3 (via C-terminal region); the interaction induces their association with the cytoskeleton upon alpha-IIb/beta3 integrin-mediated adhesion. Interacts with ITGA5 and ITGAV. Interacts and forms a complex with TMC6 and TMC8; the interaction stabilizes each component of the complex. (Microbial infection) Interacts with human papillomavirus 4/HPV4 protein E8, human papillomavirus 5/HPV5 protein E1, and human papillomavirus 16/HPV16 proteins E2 and E5. Post-translationally, phosphorylation of isoform 2 at Ser-118 by PRKD2 increases its ability to stimulate tumor angiogenesis. Ubiquitously expressed. Expressed in the epidermis, hair follicles and keratinocytes. Detected in platelets and in cell lines of megakaryocytic and erythrocytic lineages. Both isoform 1 and isoform 2 are detected in various cancer cell lines, with isoform 2 being the predominant form (at protein level).

Its subcellular location is the membrane. The protein localises to the cell membrane. The protein resides in the sarcolemma. It is found in the apical cell membrane. It localises to the cell projection. Its subcellular location is the ruffle membrane. The protein localises to the filopodium tip. The protein resides in the growth cone. It is found in the lamellipodium. It localises to the cytoplasm. Its subcellular location is the cytoskeleton. The protein localises to the microtubule organizing center. The protein resides in the centrosome. It is found in the perinuclear region. It localises to the nucleus. Its subcellular location is the neuron projection. The protein localises to the perikaryon. The protein resides in the golgi apparatus. It is found in the trans-Golgi network. Functionally, calcium-binding protein that plays a role in the regulation of numerous cellular processes, such as cell differentiation, cell division, cell proliferation, cell migration, thrombosis, angiogenesis, cardiac hypertrophy and apoptosis. Involved in bone marrow megakaryocyte differentiation by negatively regulating thrombopoietin-mediated signaling pathway. Participates in the endomitotic cell cycle of megakaryocyte, a form of mitosis in which both karyokinesis and cytokinesis are interrupted. Plays a role in integrin signaling by negatively regulating alpha-IIb/beta3 activation in thrombin-stimulated megakaryocytes preventing platelet aggregation. Up-regulates PTK2/FAK1 activity, and is also needed for the recruitment of PTK2/FAK1 to focal adhesions; it thus appears to play an important role in focal adhesion formation. Positively regulates cell migration on fibronectin in a CDC42-dependent manner, the effect being negatively regulated by PAK1. Functions as a negative regulator of stress activated MAP kinase (MAPK) signaling pathways. Down-regulates inositol 1,4,5-trisphosphate receptor-dependent calcium signaling. Involved in sphingosine kinase SPHK1 translocation to the plasma membrane in a N-myristoylation-dependent manner preventing TNF-alpha-induced apoptosis. Regulates serine/threonine-protein kinase PLK3 activity for proper completion of cell division progression. Plays a role in microtubule (MT) dynamics during neuronal development; disrupts the MT depolymerization activity of STMN2 attenuating NGF-induced neurite outgrowth and the MT reorganization at the edge of lamellipodia. Promotes cardiomyocyte hypertrophy via activation of the calcineurin/NFAT signaling pathway. Stimulates calcineurin PPP3R1 activity by mediating its anchoring to the sarcolemma. In ischemia-induced (pathological or adaptive) angiogenesis, stimulates endothelial cell proliferation, migration and microvessel formation by activating the PAK1 and ERK1/ERK2 signaling pathway. Also promotes cancer cell survival and proliferation. May regulate cell cycle and differentiation of spermatogenic germ cells, and/or differentiation of supporting Sertoli cells. Forms a complex with TMC6/EVER1 and TMC8/EVER2 in lymphocytes and keratynocytes where CIB1 stabilizes TMC6 and TMC8 levels and reciprocally. In terms of biological role, acts as a restriction factor that promotes keratinocyte-intrinsic immunity to human beta-papillomaviruses (HPVs). Plays a regulatory role in angiogenesis and tumor growth by mediating PKD/PRKD2-induced vascular endothelial growth factor A (VEGFA) secretion. The chain is Calcium and integrin-binding protein 1 (CIB1) from Homo sapiens (Human).